A 366-amino-acid polypeptide reads, in one-letter code: Phospho-N-acetylmuramoyl-pentapeptide-transferase (366 aa).

The next 10 membrane-spanning stretches (helical) occupy residues 25–45, 70–90, 93–113, 134–154, 174–194, 205–225, 245–265, 268–288, 297–317, and 343–363; these read AGAA…AIIN, GTPT…SLLW, LSNV…AIGF, LGIE…MALA, FVIN…VGAG, GLAI…AYLA, LAVI…FNAP, AIFM…SIAV, VIVG…VFWF, and QVVI…LATL.

This sequence belongs to the glycosyltransferase 4 family. MraY subfamily. Requires Mg(2+) as cofactor.

It is found in the cell inner membrane. The enzyme catalyses UDP-N-acetyl-alpha-D-muramoyl-L-alanyl-gamma-D-glutamyl-meso-2,6-diaminopimeloyl-D-alanyl-D-alanine + di-trans,octa-cis-undecaprenyl phosphate = di-trans,octa-cis-undecaprenyl diphospho-N-acetyl-alpha-D-muramoyl-L-alanyl-D-glutamyl-meso-2,6-diaminopimeloyl-D-alanyl-D-alanine + UMP. It functions in the pathway cell wall biogenesis; peptidoglycan biosynthesis. In terms of biological role, catalyzes the initial step of the lipid cycle reactions in the biosynthesis of the cell wall peptidoglycan: transfers peptidoglycan precursor phospho-MurNAc-pentapeptide from UDP-MurNAc-pentapeptide onto the lipid carrier undecaprenyl phosphate, yielding undecaprenyl-pyrophosphoryl-MurNAc-pentapeptide, known as lipid I. The chain is Phospho-N-acetylmuramoyl-pentapeptide-transferase from Agrobacterium fabrum (strain C58 / ATCC 33970) (Agrobacterium tumefaciens (strain C58)).